The primary structure comprises 94 residues: Small ribosomal subunit protein bS16c (94 aa).

This sequence belongs to the bacterial ribosomal protein bS16 family.

It localises to the plastid. Its subcellular location is the chloroplast. This Phalaenopsis aphrodite subsp. formosana (Moth orchid) protein is Small ribosomal subunit protein bS16c.